Consider the following 439-residue polypeptide: ATP-dependent protease ATPase subunit HslU (439 aa).

ATP is bound by residues isoleucine 17, 59–64 (GVGKTE), aspartate 251, glutamate 317, and arginine 389.

This sequence belongs to the ClpX chaperone family. HslU subfamily. A double ring-shaped homohexamer of HslV is capped on each side by a ring-shaped HslU homohexamer. The assembly of the HslU/HslV complex is dependent on binding of ATP.

The protein localises to the cytoplasm. ATPase subunit of a proteasome-like degradation complex; this subunit has chaperone activity. The binding of ATP and its subsequent hydrolysis by HslU are essential for unfolding of protein substrates subsequently hydrolyzed by HslV. HslU recognizes the N-terminal part of its protein substrates and unfolds these before they are guided to HslV for hydrolysis. This Campylobacter jejuni subsp. jejuni serotype O:23/36 (strain 81-176) protein is ATP-dependent protease ATPase subunit HslU.